The primary structure comprises 549 residues: Rhodopsin kinase grk7a (549 aa).

Residue S33 is modified to Phosphoserine. The RGS domain occupies 53 to 171 (FESLCEKQPI…QASPFFDKFL (119 aa)). The 264-residue stretch at 186–449 (FYEFRTLGKG…NDDPRKHEWF (264 aa)) folds into the Protein kinase domain. ATP contacts are provided by residues 192-200 (LGKGGFGEV) and K215. D311 serves as the catalytic Proton acceptor. One can recognise an AGC-kinase C-terminal domain in the interval 450–515 (KSINFARLEA…GAVSIAWQQE (66 aa)). Residues 522-549 (FDELSDPNRKESSGGSDDDKKSGTCTLL) form a disordered region. The span at 527–543 (DPNRKESSGGSDDDKKS) shows a compositional bias: basic and acidic residues. The residue at position 546 (C546) is a Cysteine methyl ester. A lipid anchor (S-geranylgeranyl cysteine) is attached at C546. The propeptide at 547–549 (TLL) is removed in mature form.

It belongs to the protein kinase superfamily. AGC Ser/Thr protein kinase family. GPRK subfamily. Post-translationally, phosphorylation at Ser-33 is regulated by light and activated by cAMP.

It is found in the membrane. It carries out the reaction L-threonyl-[rhodopsin] + ATP = O-phospho-L-threonyl-[rhodopsin] + ADP + H(+). It catalyses the reaction L-seryl-[rhodopsin] + ATP = O-phospho-L-seryl-[rhodopsin] + ADP + H(+). Retina-specific kinase involved in the shutoff of the photoresponse and adaptation to changing light conditions via cone opsin phosphorylation, including rhodopsin (RHO). In Danio rerio (Zebrafish), this protein is Rhodopsin kinase grk7a (grk7a).